Consider the following 24-residue polypeptide: U1-poneritoxin-Na1a (24 aa).

It belongs to the non-disulfide-bridged peptide (NDBP) superfamily. Medium-length antimicrobial peptide (group 3) family. Ponericin-W subfamily. In terms of tissue distribution, expressed by the venom gland.

It localises to the secreted. The protein localises to the target cell membrane. Functionally, has a broad spectrum of activity against both Gram-positive and Gram-negative bacteria and S.cerevisiae. Has insecticidal and hemolytic activities. May act by disrupting the integrity of the bacterial cell membrane. In Neoponera apicalis (Ant), this protein is U1-poneritoxin-Na1a.